A 444-amino-acid chain; its full sequence is Argininosuccinate synthase (444 aa).

Residues 18–26 and alanine 44 contribute to the ATP site; that span reads AFSGGLDTS. Tyrosine 100 provides a ligand contact to L-citrulline. Glycine 130 and threonine 132 together coordinate ATP. Residues threonine 132, asparagine 136, and aspartate 137 each coordinate L-aspartate. L-citrulline is bound at residue asparagine 136. An ATP-binding site is contributed by aspartate 137. Residues arginine 140 and serine 193 each coordinate L-citrulline. Aspartate 195 contacts ATP. L-citrulline is bound by residues threonine 202, glutamate 204, and glutamate 281.

Belongs to the argininosuccinate synthase family. Type 2 subfamily. Homotetramer.

The protein localises to the cytoplasm. It carries out the reaction L-citrulline + L-aspartate + ATP = 2-(N(omega)-L-arginino)succinate + AMP + diphosphate + H(+). Its pathway is amino-acid biosynthesis; L-arginine biosynthesis; L-arginine from L-ornithine and carbamoyl phosphate: step 2/3. The polypeptide is Argininosuccinate synthase (Haemophilus influenzae (strain PittEE)).